An 86-amino-acid polypeptide reads, in one-letter code: Toxin To8 (86 aa).

Positions 1–20 (MTRFVLFISCFFLIGMVVEC) are cleaved as a signal peptide. Residues 21–83 (KEGYLLGSRG…LWESDTNECG (63 aa)) form the LCN-type CS-alpha/beta domain. 4 disulfide bridges follow: C31/C82, C35/C57, C43/C63, and C47/C65. A Cysteine amide modification is found at C82.

Belongs to the long (4 C-C) scorpion toxin superfamily. Sodium channel inhibitor family. Beta subfamily. Expressed by the venom gland.

It is found in the secreted. In terms of biological role, beta toxins bind voltage-independently at site-4 of sodium channels (Nav) and shift the voltage of activation toward more negative potentials thereby affecting sodium channel activation and promoting spontaneous and repetitive firing. This chain is Toxin To8, found in Tityus obscurus (Amazonian scorpion).